Reading from the N-terminus, the 350-residue chain is Methionine import ATP-binding protein MetN (350 aa).

In terms of domain architecture, ABC transporter spans 2–242; it reads IELKGISQHF…PRHDVTRALI (241 aa). Position 39–46 (39–46) interacts with ATP; that stretch reads GRSGAGKS.

This sequence belongs to the ABC transporter superfamily. Methionine importer (TC 3.A.1.24) family. The complex is composed of two ATP-binding proteins (MetN), two transmembrane proteins (MetI) and a solute-binding protein (MetQ).

The protein localises to the cell inner membrane. The catalysed reaction is L-methionine(out) + ATP + H2O = L-methionine(in) + ADP + phosphate + H(+). It catalyses the reaction D-methionine(out) + ATP + H2O = D-methionine(in) + ADP + phosphate + H(+). Its function is as follows. Part of the ABC transporter complex MetNIQ involved in methionine import. Responsible for energy coupling to the transport system. This is Methionine import ATP-binding protein MetN from Ralstonia nicotianae (strain ATCC BAA-1114 / GMI1000) (Ralstonia solanacearum).